We begin with the raw amino-acid sequence, 309 residues long: Foldase protein PrsA 2 (309 aa).

An N-terminal signal peptide occupies residues 1 to 22 (MKQMNKLITGVVTLATVVTLSA). The N-palmitoyl cysteine moiety is linked to residue cysteine 23. Residue cysteine 23 is the site of S-diacylglycerol cysteine attachment. A PpiC domain is found at 146 to 241 (TPTMTAEIMQ…RTYHIIKVTK (96 aa)).

The protein belongs to the PrsA family.

Its subcellular location is the cell membrane. The catalysed reaction is [protein]-peptidylproline (omega=180) = [protein]-peptidylproline (omega=0). In terms of biological role, plays a major role in protein secretion by helping the post-translocational extracellular folding of several secreted proteins. This chain is Foldase protein PrsA 2, found in Streptococcus pyogenes serotype M6 (strain ATCC BAA-946 / MGAS10394).